Here is a 330-residue protein sequence, read N- to C-terminus: Olfactory receptor 5P70 (330 aa).

Residues 1 to 28 (MAFLEDGNHTIVTEFILLGLTDDPVLRD) are Extracellular-facing. Asn-8 is a glycosylation site (N-linked (GlcNAc...) asparagine). The helical transmembrane segment at 29-49 (ILFTIILCIYLVTVSGNLSTI) threads the bilayer. The Cytoplasmic portion of the chain corresponds to 50–57 (LLIRVSSQ). The helical transmembrane segment at 58-78 (LHHPMYFFLSHLASVDIGISS) threads the bilayer. The Extracellular segment spans residues 79 to 102 (SVTPNMLANFLVKPNTISYIGCSI). An intrachain disulfide couples Cys-100 to Cys-192. Residues 103 to 123 (QFTSAVFLATVECFLLAAMAY) form a helical membrane-spanning segment. Residues 124-136 (DRFVAICNPLLYS) lie on the Cytoplasmic side of the membrane. A helical transmembrane segment spans residues 137 to 157 (TKMSREACIQLVVGSYIQGLL). Topologically, residues 158–199 (NASFFTLSFFSLIFCGPNRINHFYCDLAPLVELSCSDVTLAV) are extracellular. A helical transmembrane segment spans residues 200–220 (VITSISAGFITLTTVFVIAIS). At 221 to 240 (YSCIFITIMKMHSTESRYKA) the chain is on the cytoplasmic side. The chain crosses the membrane as a helical span at residues 241–261 (FSTCTSHLTAVTLFYGTTMFI). The Extracellular segment spans residues 262-274 (YVMPKSSYSTDQN). The helical transmembrane segment at 275–295 (KVLSVFYMVVIPMLNPLIYSL) threads the bilayer. Over 296–330 (RNNEIKGALKRYLGKKIFSYGNLFCKTHYNDTHQV) the chain is Cytoplasmic.

Belongs to the G-protein coupled receptor 1 family.

Its subcellular location is the cell membrane. Its function is as follows. Potential odorant receptor. The protein is Olfactory receptor 5P70 of Mus musculus (Mouse).